The following is a 192-amino-acid chain: Putative 3-methyladenine DNA glycosylase (192 aa).

This sequence belongs to the DNA glycosylase MPG family.

The chain is Putative 3-methyladenine DNA glycosylase from Methanoculleus marisnigri (strain ATCC 35101 / DSM 1498 / JR1).